We begin with the raw amino-acid sequence, 324 residues long: Beta-ketoacyl-[acyl-carrier-protein] synthase III (324 aa).

Catalysis depends on residues C112 and H251. The ACP-binding stretch occupies residues 252–256 (QANLR). Residue N281 is part of the active site.

It belongs to the thiolase-like superfamily. FabH family. As to quaternary structure, homodimer.

It is found in the cytoplasm. The catalysed reaction is malonyl-[ACP] + acetyl-CoA + H(+) = 3-oxobutanoyl-[ACP] + CO2 + CoA. Its pathway is lipid metabolism; fatty acid biosynthesis. Catalyzes the condensation reaction of fatty acid synthesis by the addition to an acyl acceptor of two carbons from malonyl-ACP. Catalyzes the first condensation reaction which initiates fatty acid synthesis and may therefore play a role in governing the total rate of fatty acid production. Possesses both acetoacetyl-ACP synthase and acetyl transacylase activities. Its substrate specificity determines the biosynthesis of branched-chain and/or straight-chain of fatty acids. This chain is Beta-ketoacyl-[acyl-carrier-protein] synthase III, found in Clostridium perfringens (strain SM101 / Type A).